Consider the following 425-residue polypeptide: Histidine--tRNA ligase (425 aa).

This sequence belongs to the class-II aminoacyl-tRNA synthetase family. In terms of assembly, homodimer.

The protein localises to the cytoplasm. The catalysed reaction is tRNA(His) + L-histidine + ATP = L-histidyl-tRNA(His) + AMP + diphosphate + H(+). In Chlorobium chlorochromatii (strain CaD3), this protein is Histidine--tRNA ligase.